The chain runs to 520 residues: GMP synthase [glutamine-hydrolyzing] (520 aa).

A Glutamine amidotransferase type-1 domain is found at 9–202 (SVLIIDFGSQ…VHNIAGITGD (194 aa)). The active-site Nucleophile is the C86. Catalysis depends on residues H176 and E178. The 193-residue stretch at 203–395 (WSMSAYRAKA…LGLPDSFIGR (193 aa)) folds into the GMPS ATP-PPase domain. 230–236 (SGGVDSS) lines the ATP pocket.

Homodimer.

It catalyses the reaction XMP + L-glutamine + ATP + H2O = GMP + L-glutamate + AMP + diphosphate + 2 H(+). The protein operates within purine metabolism; GMP biosynthesis; GMP from XMP (L-Gln route): step 1/1. Its function is as follows. Catalyzes the synthesis of GMP from XMP. The polypeptide is GMP synthase [glutamine-hydrolyzing] (Allorhizobium ampelinum (strain ATCC BAA-846 / DSM 112012 / S4) (Agrobacterium vitis (strain S4))).